A 75-amino-acid chain; its full sequence is Mu-conotoxin GIIIA (75 aa).

An N-terminal signal peptide occupies residues 1–20 (MMSKLGVLLTICLLLFPLTA). The propeptide occupies 21 to 51 (LPMDGDEPANRPVERMQDNISSEQYPLFEKR). Intrachain disulfides connect Cys54–Cys66, Cys55–Cys71, and Cys61–Cys72. 4-hydroxyproline; partial occurs at positions 57 and 58. Pro68 bears the 4-hydroxyproline mark. Position 73 is an alanine amide (Ala73).

It belongs to the conotoxin M superfamily. Hydroxylated; hydroxylations improve the ability to block Nav1.4/SCN4A sodium channels but does not affect folding. As to expression, expressed by the venom duct.

It is found in the secreted. In terms of biological role, mu-conotoxins block voltage-gated sodium channels (Nav). This toxin potently blocks rat Nav1.4/SCN4A (IC(50)= 19-110 nM). It also moderately blocks rNav1.1/SCN1A (Kd=260 nM), rNav1.2/SCN2A (IC(50)=2.7-17.8 uM), and mNav1.6/SCN8A (IC(50)=680 nM). The inhibition is reversible. In vivo, induces paralysis to an isolated skeletal muscle preparation from frog (cutaneous pectoralis) within a few minutes. In Conus geographus (Geography cone), this protein is Mu-conotoxin GIIIA.